The primary structure comprises 366 residues: Ribonuclease P protein subunit drpp30 (366 aa).

A disordered region spans residues 265–366 (EDTQPTNNNI…DIDNNKRKRE (102 aa)). Over residues 275–290 (PHEKHINKESTGKETI) the composition is skewed to basic and acidic residues. 2 stretches are compositionally biased toward low complexity: residues 291-324 (PKPT…TPSI) and 333-351 (TAKS…AQKQ). Residues 352–366 (GKMDIDIDNNKRKRE) show a composition bias toward basic and acidic residues.

Belongs to the eukaryotic/archaeal RNase P protein component 3 family.

Its subcellular location is the nucleus. The catalysed reaction is Endonucleolytic cleavage of RNA, removing 5'-extranucleotides from tRNA precursor.. Its function is as follows. Component of ribonuclease P, a protein complex that generates mature tRNA molecules by cleaving their 5'-ends. This Dictyostelium discoideum (Social amoeba) protein is Ribonuclease P protein subunit drpp30 (drpp30).